A 421-amino-acid polypeptide reads, in one-letter code: UDP-N-acetylglucosamine 1-carboxyvinyltransferase (421 aa).

22–23 (KN) is a binding site for phosphoenolpyruvate. Arginine 93 lines the UDP-N-acetyl-alpha-D-glucosamine pocket. Catalysis depends on cysteine 117, which acts as the Proton donor. Position 117 is a 2-(S-cysteinyl)pyruvic acid O-phosphothioketal (cysteine 117). UDP-N-acetyl-alpha-D-glucosamine is bound by residues 122–126 (RPVDL), aspartate 308, and isoleucine 330.

The protein belongs to the EPSP synthase family. MurA subfamily.

The protein localises to the cytoplasm. It carries out the reaction phosphoenolpyruvate + UDP-N-acetyl-alpha-D-glucosamine = UDP-N-acetyl-3-O-(1-carboxyvinyl)-alpha-D-glucosamine + phosphate. It participates in cell wall biogenesis; peptidoglycan biosynthesis. Cell wall formation. Adds enolpyruvyl to UDP-N-acetylglucosamine. The polypeptide is UDP-N-acetylglucosamine 1-carboxyvinyltransferase (Pseudomonas entomophila (strain L48)).